We begin with the raw amino-acid sequence, 155 residues long: SsrA-binding protein (155 aa).

This sequence belongs to the SmpB family.

The protein localises to the cytoplasm. Functionally, required for rescue of stalled ribosomes mediated by trans-translation. Binds to transfer-messenger RNA (tmRNA), required for stable association of tmRNA with ribosomes. tmRNA and SmpB together mimic tRNA shape, replacing the anticodon stem-loop with SmpB. tmRNA is encoded by the ssrA gene; the 2 termini fold to resemble tRNA(Ala) and it encodes a 'tag peptide', a short internal open reading frame. During trans-translation Ala-aminoacylated tmRNA acts like a tRNA, entering the A-site of stalled ribosomes, displacing the stalled mRNA. The ribosome then switches to translate the ORF on the tmRNA; the nascent peptide is terminated with the 'tag peptide' encoded by the tmRNA and targeted for degradation. The ribosome is freed to recommence translation, which seems to be the essential function of trans-translation. The polypeptide is SsrA-binding protein (Alkaliphilus oremlandii (strain OhILAs) (Clostridium oremlandii (strain OhILAs))).